The chain runs to 55 residues: Large ribosomal subunit protein bL33 (55 aa).

This sequence belongs to the bacterial ribosomal protein bL33 family.

This Aliivibrio salmonicida (strain LFI1238) (Vibrio salmonicida (strain LFI1238)) protein is Large ribosomal subunit protein bL33.